Consider the following 232-residue polypeptide: Peptidoglycan-recognition protein LB (232 aa).

The N-terminal stretch at 1 to 15 (MTALGLVLLSMMGYS) is a signal peptide. The N-acetylmuramoyl-L-alanine amidase domain occupies 53-179 (APYVIIHHSY…RQVRDTECPG (127 aa)). His-59 contacts Zn(2+). Cys-67 and Cys-73 are disulfide-bonded. Residues His-169 and Cys-177 each coordinate Zn(2+). Residue Asn-196 is glycosylated (N-linked (GlcNAc...) asparagine). The disordered stretch occupies residues 213–232 (HPQAAAPQKPHQSPPAAPKV).

Belongs to the N-acetylmuramoyl-L-alanine amidase 2 family. In terms of assembly, monomer. Zn(2+) serves as cofactor. Widely expressed.

It is found in the secreted. It carries out the reaction Hydrolyzes the link between N-acetylmuramoyl residues and L-amino acid residues in certain cell-wall glycopeptides.. N-acetylmuramyl-L-alanine amidase involved in innate immunity by degrading bacterial peptidoglycans (PGN). Probably plays a scavenger role by digesting biologically active PGN into biologically inactive fragments. Has no direct bacteriolytic activity. The protein is Peptidoglycan-recognition protein LB (PGRP-LB) of Drosophila melanogaster (Fruit fly).